A 273-amino-acid chain; its full sequence is 4-hydroxy-tetrahydrodipicolinate reductase (273 aa).

NAD(+) is bound at residue 12–17 (GANGRM). Arg39 contributes to the NADP(+) binding site. NAD(+)-binding positions include 102–104 (GTT) and 126–129 (AANF). Catalysis depends on His159, which acts as the Proton donor/acceptor. (S)-2,3,4,5-tetrahydrodipicolinate is bound at residue His160. The Proton donor role is filled by Lys163. Residue 169–170 (GT) coordinates (S)-2,3,4,5-tetrahydrodipicolinate.

This sequence belongs to the DapB family. In terms of assembly, homotetramer.

Its subcellular location is the cytoplasm. It carries out the reaction (S)-2,3,4,5-tetrahydrodipicolinate + NAD(+) + H2O = (2S,4S)-4-hydroxy-2,3,4,5-tetrahydrodipicolinate + NADH + H(+). The enzyme catalyses (S)-2,3,4,5-tetrahydrodipicolinate + NADP(+) + H2O = (2S,4S)-4-hydroxy-2,3,4,5-tetrahydrodipicolinate + NADPH + H(+). The protein operates within amino-acid biosynthesis; L-lysine biosynthesis via DAP pathway; (S)-tetrahydrodipicolinate from L-aspartate: step 4/4. In terms of biological role, catalyzes the conversion of 4-hydroxy-tetrahydrodipicolinate (HTPA) to tetrahydrodipicolinate. The chain is 4-hydroxy-tetrahydrodipicolinate reductase from Cronobacter sakazakii (strain ATCC BAA-894) (Enterobacter sakazakii).